The primary structure comprises 593 residues: Transcription factor ATEG_07667 (593 aa).

Residues 18 to 47 (CTQCYKAKCRCVRTPSGDTCERCIRLKKRC) constitute a DNA-binding region (zn(2)-C6 fungal-type).

Its subcellular location is the nucleus. In terms of biological role, transcriptional regulator that regulates both the azasperpyranone A biosynthesis clusters A and B. Specifically up-regulates the expression of the cluster A and B specific transcription factors ATEG_03638 and ATEG_07666, which in turn activate the expression of their respective clusters. This chain is Transcription factor ATEG_07667, found in Aspergillus terreus (strain NIH 2624 / FGSC A1156).